The sequence spans 303 residues: Probable endonuclease 4 (303 aa).

His78, His118, Glu154, Asp188, His191, His222, Asp235, His237, and Glu267 together coordinate Zn(2+).

Belongs to the AP endonuclease 2 family. Requires Zn(2+) as cofactor.

It catalyses the reaction Endonucleolytic cleavage to 5'-phosphooligonucleotide end-products.. In terms of biological role, endonuclease IV plays a role in DNA repair. It cleaves phosphodiester bonds at apurinic or apyrimidinic (AP) sites, generating a 3'-hydroxyl group and a 5'-terminal sugar phosphate. This chain is Probable endonuclease 4, found in Mycoplasmoides gallisepticum (strain R(low / passage 15 / clone 2)) (Mycoplasma gallisepticum).